Consider the following 136-residue polypeptide: Small ribosomal subunit protein uS9 (136 aa).

The protein belongs to the universal ribosomal protein uS9 family.

This is Small ribosomal subunit protein uS9 from Borrelia turicatae (strain 91E135).